A 913-amino-acid chain; its full sequence is Proline and serine-rich protein 1 (913 aa).

Position 1 is an N-acetylmethionine (M1). Disordered regions lie at residues 233 to 291, 488 to 507, 592 to 618, and 888 to 913; these read VPPP…PAVS, ASLSSLPNRNSDSPASATNK, SEPTSPPPSAFKGPAHPGTPVRGTLGL, and DGFPSYPSTPGTPFSLQTGLSQSGWQ. Over residues 251–275 the composition is skewed to polar residues; that stretch reads LSSQSKPTQSQTFSTPASQLFSPHG. Residues 276–291 show a composition bias toward low complexity; the sequence is SSNPSTPAATPVPAVS. A compositionally biased stretch (polar residues) spans 488–506; the sequence is ASLSSLPNRNSDSPASATN. The span at 893–913 shows a compositional bias: polar residues; that stretch reads YPSTPGTPFSLQTGLSQSGWQ.

In terms of assembly, interacts with TET2 and OGT; this interaction mediates TET2 O-GlcNAcylation and stability by promoting the interaction between OGT and TET2. Interacts with KDM6A. Interacts with TET1. In terms of processing, glycosylated. Interaction with OGT leads to GlcNAcylation.

Its function is as follows. Mediates OGT interaction with and O-GlcNAcylation of TET2 to control TET2 stabilization at enhancers and CpG islands (CGIs). The polypeptide is Proline and serine-rich protein 1 (Mus musculus (Mouse)).